We begin with the raw amino-acid sequence, 104 residues long: Small ribosomal subunit protein uS10 (104 aa).

This sequence belongs to the universal ribosomal protein uS10 family. Part of the 30S ribosomal subunit.

Involved in the binding of tRNA to the ribosomes. The chain is Small ribosomal subunit protein uS10 from Ruegeria pomeroyi (strain ATCC 700808 / DSM 15171 / DSS-3) (Silicibacter pomeroyi).